The primary structure comprises 260 residues: Snake venom serine protease 2 (260 aa).

The first 18 residues, 1 to 18 (MVLIRVLANLLILQLFYA), serve as a signal peptide directing secretion. Positions 19 to 24 (QKSSEL) are excised as a propeptide. Positions 25-251 (IIGGDECNIN…HLDWIKSIIA (227 aa)) constitute a Peptidase S1 domain. Cystine bridges form between Cys-31/Cys-165, Cys-52/Cys-68, Cys-100/Cys-258, Cys-144/Cys-212, Cys-176/Cys-191, and Cys-202/Cys-227. Residues Asn-123 and Asn-124 are each glycosylated (N-linked (GlcNAc...) asparagine).

The protein belongs to the peptidase S1 family. Snake venom subfamily. Monomer. In terms of tissue distribution, expressed by the venom gland.

Its subcellular location is the secreted. Functionally, snake venom serine protease that may act in the hemostasis system of the prey. The chain is Snake venom serine protease 2 (TLF2) from Protobothrops flavoviridis (Habu).